Consider the following 284-residue polypeptide: ATP phosphoribosyltransferase (284 aa).

The protein belongs to the ATP phosphoribosyltransferase family. Long subfamily. Requires Mg(2+) as cofactor.

It is found in the cytoplasm. It catalyses the reaction 1-(5-phospho-beta-D-ribosyl)-ATP + diphosphate = 5-phospho-alpha-D-ribose 1-diphosphate + ATP. It participates in amino-acid biosynthesis; L-histidine biosynthesis; L-histidine from 5-phospho-alpha-D-ribose 1-diphosphate: step 1/9. Its activity is regulated as follows. Feedback inhibited by histidine. Functionally, catalyzes the condensation of ATP and 5-phosphoribose 1-diphosphate to form N'-(5'-phosphoribosyl)-ATP (PR-ATP). Has a crucial role in the pathway because the rate of histidine biosynthesis seems to be controlled primarily by regulation of HisG enzymatic activity. This is ATP phosphoribosyltransferase from Pseudarthrobacter chlorophenolicus (strain ATCC 700700 / DSM 12829 / CIP 107037 / JCM 12360 / KCTC 9906 / NCIMB 13794 / A6) (Arthrobacter chlorophenolicus).